The sequence spans 238 residues: Serine protease SplA (238 aa).

An N-terminal signal peptide occupies residues 1-38 (MNKNVMVKGLTALTILTILTSLGFAENISNQPHSIAKA). Residues H77, D116, and S192 each act as charge relay system in the active site.

It belongs to the peptidase S1B family.

The protein localises to the secreted. In Staphylococcus aureus (strain COL), this protein is Serine protease SplA (splA).